We begin with the raw amino-acid sequence, 444 residues long: NAD(+)--protein-arginine ADP-ribosyltransferase Tre1 (444 aa).

Positions 72–140 (PRHVTGVLAD…NDLLACSAEI (69 aa)) are PAAR domain. The region spanning 266–444 (MTLAEAVGQE…TTHLLYREIP (179 aa)) is the TR mART core domain. The tract at residues 274-444 (QEQAKVWTQT…TTHLLYREIP (171 aa)) is ART domain. Active-site residues include Arg356, Ser381, and Glu415.

Belongs to the Arg-specific ADP-ribosyltransferase family. Forms a stable complex with cognate immunity protein Tri1-Sp.

Its subcellular location is the secreted. The protein resides in the host cytoplasm. It catalyses the reaction L-arginyl-[protein] + NAD(+) = N(omega)-(ADP-D-ribosyl)-L-arginyl-[protein] + nicotinamide + H(+). Its function is as follows. Toxic component of a contact-dependent interbacterial competition system (also called effector-immunity systems). Acts by ADP-ribosylating a number of target proteins in target cells; E.coli target proteins include FtsZ, EFTu, RNase E, Fis, RL9, SucB, and LolD. FtsZ is thought to be the physiologically relevant target as it is ADP-ribosylated on a critical residue. ADP-ribosylation of FtsZ prevents formation of the FtsZ mid-cell ring and inhibits cell division. Overexpression of the whole Tre1 protein or the ART domain in E.coli is toxic; cells elongate dramatically and some undergo lysis. Toxic activity is neutralized by coexpression of the cognate immunity protein Tri1-Sp; Tri1-Sp neutralizes this protein both by binding to and occluding the active site (via Tri1's N-terminal extension) and by hydrolysis of the ADP-ribosyl moiety from the target protein. Tre1 can also be neutralized by non-cognate immunity protein Tri1-Pp from P.putida strain GB-1, with which it does not form a stable complex; DraG of R.palustris does not neutralize the toxic effects of this protein. In interbacterial competition studies Tri1 from P.putida strain B6-2 also neutralizes this protein. The protein is NAD(+)--protein-arginine ADP-ribosyltransferase Tre1 of Serratia proteamaculans (strain 568).